A 474-amino-acid polypeptide reads, in one-letter code: Zinc finger protein 230 (474 aa).

One can recognise a KRAB domain in the interval 8–76 (VTFKDVAVFF…ETATQREGNS (69 aa)). The tract at residues 80–167 (TIAEAGPHED…PQQFHSGEKS (88 aa)) is KRNB. C2H2-type zinc fingers lie at residues 168 to 190 (HTCNECGKSFCYISALRIHQRVH), 196 to 218 (SKCDMRGKEFSQSSCLQTRERVH), 224 to 246 (FKCEQCGKGFRCRAILQVHCKLH), 252 to 274 (YICEKCGRAFIHDFQLQKHQIIH), 280 to 302 (FKCEICGKSFCLRSSLNRHCMVH), 308 to 330 (YKSEECGKGFTDSLDLHKHQIIH), 336 to 358 (YNCKECGKSFRWSSYLLIHQRIH), 364 to 386 (YRCEECGKGYISKSGLNLHQRVH), and 392 to 414 (YNCKECGKSFSRASSILNHKKLH). The C2H2-type 10; atypical zinc-finger motif lies at 420 to 442 (FKCEDCGKRLVHRSFCKDQQGDH).

It belongs to the krueppel C2H2-type zinc-finger protein family.

The protein resides in the nucleus. May be involved in transcriptional regulation. This is Zinc finger protein 230 (ZNF230) from Homo sapiens (Human).